Reading from the N-terminus, the 227-residue chain is Protein FAM3C (227 aa).

The signal sequence occupies residues 1–24; sequence MRVAGAAKLVVAVAVFLLTFYVIS. Disulfide bonds link Cys-58/Cys-86 and Cys-64/Cys-221. A GG-type lectin domain is found at 67–225; the sequence is KHFAFKMASG…VEMEGCIPQK (159 aa).

It belongs to the FAM3 family.

The protein localises to the secreted. The protein resides in the cytoplasmic vesicle. In terms of biological role, may be involved in retinal laminar formation. Promotes epithelial to mesenchymal transition. This Rattus norvegicus (Rat) protein is Protein FAM3C (Fam3c).